Here is a 693-residue protein sequence, read N- to C-terminus: Transcription activator of gluconeogenesis BC1G_14637 (693 aa).

Residues 1-12 are compositionally biased toward acidic residues; sequence MSGETEIDDPEV. The segment at 1-75 is disordered; it reads MSGETEIDDP…KFDPKDPLRP (75 aa). Positions 21–49 are enriched in basic and acidic residues; that stretch reads YSDHEQELDVIGKEGDNQEMAEQKVRPDG. Positions 52-62 are enriched in polar residues; the sequence is NGNTVGATATV. A compositionally biased stretch (basic and acidic residues) spans 65–74; sequence PKFDPKDPLR. The segment at residues 84–112 is a DNA-binding region (zn(2)-C6 fungal-type); it reads CFACQRAHLTCGDERPCQRCIKRGLADAC. Polar residues-rich tracts occupy residues 144-155 and 275-287; these read SSNRATAASTPT and SAET…SAGM. Disordered stretches follow at residues 144–170, 273–299, 350–413, and 531–567; these read SSNR…QPDT, SGSA…FSNN, TSGS…RNRD, and NLNT…DSNP. The span at 356 to 367 shows a compositional bias: low complexity; the sequence is SPSTDASPAAST. Residues 369 to 379 show a composition bias toward polar residues; sequence GFESSPTTTNY. Low complexity predominate over residues 394–408; it reads KSGPSGKLGPSGILG.

Belongs to the ERT1/acuK family.

It is found in the nucleus. In terms of biological role, transcription factor which regulates nonfermentable carbon utilization. Activator of gluconeogenetic genes. The protein is Transcription activator of gluconeogenesis BC1G_14637 of Botryotinia fuckeliana (strain B05.10) (Noble rot fungus).